Here is a 1220-residue protein sequence, read N- to C-terminus: DNA-directed RNA polymerase subunit beta (1220 aa).

This sequence belongs to the RNA polymerase beta chain family. The RNAP catalytic core consists of 2 alpha, 1 beta, 1 beta' and 1 omega subunit. When a sigma factor is associated with the core the holoenzyme is formed, which can initiate transcription.

It carries out the reaction RNA(n) + a ribonucleoside 5'-triphosphate = RNA(n+1) + diphosphate. Its function is as follows. DNA-dependent RNA polymerase catalyzes the transcription of DNA into RNA using the four ribonucleoside triphosphates as substrates. This chain is DNA-directed RNA polymerase subunit beta, found in Mesomycoplasma hyopneumoniae (strain 7448) (Mycoplasma hyopneumoniae).